The chain runs to 275 residues: Elongation factor Ts (275 aa).

The segment at 80–83 is involved in Mg(2+) ion dislocation from EF-Tu; it reads TDFV.

This sequence belongs to the EF-Ts family.

Its subcellular location is the cytoplasm. Functionally, associates with the EF-Tu.GDP complex and induces the exchange of GDP to GTP. It remains bound to the aminoacyl-tRNA.EF-Tu.GTP complex up to the GTP hydrolysis stage on the ribosome. This is Elongation factor Ts from Clavibacter michiganensis subsp. michiganensis (strain NCPPB 382).